A 126-amino-acid chain; its full sequence is Small ribosomal subunit protein bS6 (126 aa).

This sequence belongs to the bacterial ribosomal protein bS6 family.

Binds together with bS18 to 16S ribosomal RNA. This is Small ribosomal subunit protein bS6 from Actinobacillus succinogenes (strain ATCC 55618 / DSM 22257 / CCUG 43843 / 130Z).